Here is a 461-residue protein sequence, read N- to C-terminus: mRNA cap guanine-N(7) methyltransferase (461 aa).

Positions Met1–Glu117 are disordered. Phosphoserine occurs at positions 11, 15, 16, and 58. Composition is skewed to polar residues over residues Glu14 to Arg29 and Glu49 to Ser58. Residues Leu65–Gly93 show a composition bias toward basic and acidic residues. Ser94 and Ser99 each carry phosphoserine. A Nuclear localization signal motif is present at residues Lys107–Lys109. An mRNA cap 0 methyltransferase domain is found at Ser152–Gln460. Asn161 to Asn162 lines the mRNA pocket. The S-adenosyl-L-methionine site is built by Lys165, Gly190, Asp212, Asp246, Gln269, and Tyr274.

It belongs to the class I-like SAM-binding methyltransferase superfamily. mRNA cap 0 methyltransferase family. In terms of assembly, interacts with importin alpha, leading to stimulate both RNA-binding and methyltransferase activity. Interaction with importin alpha and beta is required for its nuclear localization, importin beta dissociating in response to RanGTP, allowing RNMT-importin alpha to bind RNA substrates. Interacts with elongating form of polymerase II and RNGTT. Interacts with RAMAC, this interaction significantly enhances RNA-binding and cap methyltransferase activity.

The protein resides in the nucleus. It catalyses the reaction a 5'-end (5'-triphosphoguanosine)-ribonucleoside in mRNA + S-adenosyl-L-methionine = a 5'-end (N(7)-methyl 5'-triphosphoguanosine)-ribonucleoside in mRNA + S-adenosyl-L-homocysteine. Its activity is regulated as follows. Methyltransferase activity is activated by RAMAC. Its function is as follows. Catalytic subunit of the mRNA-capping methyltransferase RNMT:RAMAC complex that methylates the N7 position of the added guanosine to the 5'-cap structure of mRNAs. Binds RNA containing 5'-terminal GpppC. This is mRNA cap guanine-N(7) methyltransferase (Rnmt) from Rattus norvegicus (Rat).